A 1658-amino-acid chain; its full sequence is Collagen alpha-1(XXVII) chain B (1658 aa).

Residues 1–38 (MEPDNTPSSRLRAAGVGGRAVFFCMVLYCTCCLRLAQA) form the signal peptide. Residues 66–229 (GVILTTRARI…NYCKYIKKQC (164 aa)) enclose the Laminin G-like domain. Positions 308-323 (SIRNRTSQISPKPTQQ) are enriched in polar residues. 6 disordered regions span residues 308–332 (SIRNRTSQISPKPTQQNRKKAKKER), 345–364 (VTDSPTSQQQNQVDIPTTTT), 427–550 (GLKG…GNMG), 571–614 (GERG…APGP), 637–1332 (GPKG…DAGE), and 1377–1415 (IIGPSGNPGPQGDKGNKGEMGVQGPRGPPGPRGPPGPPG). Residues 424–1417 (ELTGLKGEPG…RGPPGPPGLP (994 aa)) are triple-helical region. 7 consecutive Collagen-like domains span residues 425–478 (LTGL…GNPG), 493–552 (GLVG…MGPK), 556–615 (GFIG…PGPV), 622–681 (GDMG…PGLP), 685–744 (GKPG…PGLE), 748–807 (GPVG…MGLA), and 811–870 (GDRG…RGPD). The segment covering 434–444 (LPGPPGPPGQP) has biased composition (pro residues). The segment covering 491 to 506 (DPGLVGLPGQPGQPGR) has biased composition (low complexity). Low complexity-rich tracts occupy residues 657–666 (LGLPGEPGEP) and 678–692 (PGLPGVQGKPGPQGK). Gly residues predominate over residues 733 to 742 (GIPGPGGLPG). 2 stretches are compositionally biased toward low complexity: residues 837–852 (RGLSGPAGAPGPHGSR) and 875–890 (EKGMMGMKGPEGPPGK). Collagen-like domains follow at residues 892 to 951 (GLSG…IGLP), 952 to 1011 (GKAG…VGLE), 1024 to 1083 (GTEG…IGPK), 1084 to 1137 (GSRG…DGKV), 1139 to 1198 (GPPG…KGSK), 1199 to 1258 (GNKG…PGDL), 1268 to 1327 (GKPG…KGQP), and 1361 to 1420 (GPQG…PAVA). The span at 1040–1058 (PEGKPGKIGERGKPGEKGS) shows a compositional bias: basic and acidic residues. Positions 1112 to 1124 (HQGPQGSLGSPGP) are enriched in low complexity. Residues 1125-1137 (KGEKGEQGDDGKV) are compositionally biased toward basic and acidic residues. Over residues 1215–1230 (NRGSPGPVGVPGPRGV) the composition is skewed to low complexity. Residues 1307 to 1316 (GLNGGMGFPG) show a composition bias toward gly residues. Residues 1402-1415 (RGPPGPRGPPGPPG) are compositionally biased toward pro residues. The propeptide at 1421–1658 (FSHENEALGA…HLEVGPVCFL (238 aa)) is C-terminal propeptide. The region spanning 1458–1658 (SEIFKTLHYL…HLEVGPVCFL (201 aa)) is the Fibrillar collagen NC1 domain. Intrachain disulfides connect cysteine 1488–cysteine 1520, cysteine 1529–cysteine 1656, and cysteine 1565–cysteine 1609. Residues aspartate 1506, asparagine 1508, cysteine 1511, and aspartate 1514 each contribute to the Ca(2+) site. The N-linked (GlcNAc...) asparagine glycan is linked to asparagine 1567.

This sequence belongs to the fibrillar collagen family. In terms of tissue distribution, weakly expressed in the notochord from the 6 somite stage. Expressed throughout the notochord at 13 somites, then becomes restricted to the distal tip of the notochord by 24 hpf. Also expressed in head cartilages by 48 hpf.

Its subcellular location is the secreted. It is found in the extracellular space. It localises to the extracellular matrix. In terms of biological role, may play a role during the calcification of cartilage and the transition of cartilage to bone. Together with col27a1a, plays a role in development of the notochord and axial skeleton. The sequence is that of Collagen alpha-1(XXVII) chain B (col27a1b) from Danio rerio (Zebrafish).